The primary structure comprises 965 residues: MSENTYQIETRRRSRSKTPFLRSSCDHENCEHAGEEGHVHHLKRKSAAPNVQTIIEEHIVESSISKKTRAKAFAQLTSDYSSDDMTPDAKRKQNSITATVTSILTKRSGGATSTPRNRSQLETTQNTLNSAQEKLNQSNGNLSSGNVSDYLAYIEYRDAGEYWNKTPKTDYTYSELSPHRRQLAPGIVAMPNMSRKSLENHNDRVNYMVQQNPAQEEFIRRRYQSKYTQQVNYDSADELDATFGQQKQSWWLIRLIQLVVSSITTVWSRVTNLSATETTAYQNYHAKRQQSQQVGLWWKIVQTIGGGLASLLRYLYVFIGSVLSLDTWLLRSSDAENKSKKRFLIFLLILLPLLLLSGWLLLQEDQRSAYVQRAEALLPLPLSIFGSLRSRFSNAGATLKSWMEVPTVRSPQREAEAIKVNMASIEQNIQKALTAEEYENILNHVNSYVQQLVELKMQQHSKELAPQQIELFVKLMKENLKQIMYKTELSEKDLSDLAIKLKLELQSSGGWQDGAKLSQANLEEITKLIKAEVHLHESHYTIQLDRIDFASLLERILAAPALADFVDARISLRVGELEPKESSGSSDAEVQIERLNREIAFIKLALSDKQAENADLHQSISNLKLGQEDLLERIQQHELSQDRRFHGLLAEIENKLSALNDSQFALLNKQIKLSLVEILGFKQSTAGGSAGQLDDFDLQTWVRSMFVAKDYLEQQLLELNKRTNNNIRDEIERSSILLMSDISQRLKREILLVVEAKHNESTKALKGHIREEEVRQIVKTVLAIYDADKTGLVDFALESAGGQILSTRCTESYQTKSAQISVFGIPLWYPTNTPRVAISPNVQPGECWAFQGFPGFLVLKLNSLVYVTGFTLEHIPKSLSPTGRIESAPRNFTVWGLEQEKDQEPVLFGDYQFEDNGASLQYFAVQNLDIKRPYEIVELRIETNHGHPTYTCLYRFRVHGKPPAT.

The tract at residues 1–20 is disordered; sequence MSENTYQIETRRRSRSKTPF. 2 helical membrane-spanning segments follow: residues 303 to 323 and 343 to 363; these read TIGGGLASLLRYLYVFIGSVL and FLIFLLILLPLLLLSGWLLLQ. The stretch at 585–612 forms a coiled coil; it reads SSDAEVQIERLNREIAFIKLALSDKQAE. Residues 801-963 form the SUN domain; sequence GGQILSTRCT…YRFRVHGKPP (163 aa).

In terms of assembly, core component of the LINC complex which is composed of inner nuclear membrane SUN domain-containing proteins coupled to outer nuclear membrane KASH domain-containing nesprins. Expressed in all cells in the eye disk.

The protein localises to the membrane. It is found in the cytoplasm. It localises to the cytoskeleton. Its subcellular location is the microtubule organizing center. The protein resides in the perinuclear region. Its function is as follows. Component of the LINC (LInker of Nucleoskeleton and Cytoskeleton) complex involved in the connection between the nuclear lamina and the cytoskeleton. Is required to nuclear migration in eye and to anchor klar in the nuclear membrane. In Drosophila melanogaster (Fruit fly), this protein is Klaroid protein.